We begin with the raw amino-acid sequence, 751 residues long: Semaphorin-3C (751 aa).

Residues 1–21 form the signal peptide; the sequence is MAFQAVCILVGVFVCSTYVKG. Positions 28–511 constitute a Sema domain; the sequence is RVYLTFDELR…SNEGLAQVSL (484 aa). N-linked (GlcNAc...) asparagine glycosylation is present at asparagine 81. Cysteine 101 and cysteine 112 are disulfide-bonded. N-linked (GlcNAc...) asparagine glycosylation is present at asparagine 123. 3 disulfides stabilise this stretch: cysteine 130–cysteine 139, cysteine 266–cysteine 378, and cysteine 290–cysteine 338. Asparagine 268 carries an N-linked (GlcNAc...) asparagine glycan. An N-linked (GlcNAc...) asparagine glycan is attached at asparagine 465. An intrachain disulfide couples cysteine 514 to cysteine 532. The Ig-like C2-type domain maps to 571–655; it reads AYRNAAEIVQ…TENSFKQTIA (85 aa). Asparagine 585 and asparagine 586 each carry an N-linked (GlcNAc...) asparagine glycan. The cysteines at positions 592 and 643 are disulfide-linked. Over residues 712–731 the composition is skewed to basic and acidic residues; that stretch reads TRQQHQQGEESQKMRGDYGK. A disordered region spans residues 712 to 751; that stretch reads TRQQHQQGEESQKMRGDYGKLKALINSRKSRNRRNQLPES.

The protein belongs to the semaphorin family. As to quaternary structure, interacts with PLXND1.

It is found in the secreted. Binds to plexin family members and plays an important role in the regulation of developmental processes. Required for normal cardiovascular development during embryogenesis. Functions as attractant for growing axons, and thereby plays an important role in axon growth and axon guidance. This Bos taurus (Bovine) protein is Semaphorin-3C (SEMA3C).